The following is a 324-amino-acid chain: Geranylgeranyl pyrophosphate synthase dpmpD (324 aa).

Isopentenyl diphosphate contacts are provided by K50, R53, and H82. Residues D89 and D93 each contribute to the Mg(2+) site. Dimethylallyl diphosphate is bound at residue R98. R99 serves as a coordination point for isopentenyl diphosphate. Dimethylallyl diphosphate is bound by residues K176, T177, and Q210. Residue D213 participates in Mg(2+) binding. Dimethylallyl diphosphate contacts are provided by N217, K227, and K237.

The protein belongs to the FPP/GGPP synthase family. Mg(2+) is required as a cofactor.

It carries out the reaction isopentenyl diphosphate + dimethylallyl diphosphate = (2E)-geranyl diphosphate + diphosphate. The enzyme catalyses isopentenyl diphosphate + (2E)-geranyl diphosphate = (2E,6E)-farnesyl diphosphate + diphosphate. The catalysed reaction is isopentenyl diphosphate + (2E,6E)-farnesyl diphosphate = (2E,6E,10E)-geranylgeranyl diphosphate + diphosphate. It participates in secondary metabolite biosynthesis; terpenoid biosynthesis. In terms of biological role, geranylgeranyl pyrophosphate synthase; part of the gene cluster that mediates the biosynthesis of diterpenoid pyrones. The first step of the pathway is the synthesis of the alpha-pyrone moiety by the polyketide synthase dpmpA via condensation of one acetyl-CoA starter unit with 3 malonyl-CoA units and 2 methylations. The alpha-pyrone is then combined with geranylgeranyl pyrophosphate (GGPP) formed by the GGPP synthase dpmpD through the action of the prenyltransferase dpmpC to yield a linear alpha-pyrone diterpenoid. Subsequent steps in the diterpenoid pyrone biosynthetic pathway involve the decalin core formation, which is initiated by the epoxidation of the C10-C11 olefin by the FAD-dependent oxidoreductase dpmpE, and is followed by a cyclization cascade catalyzed by the terpene cyclase dpmpB. The short chain dehydrogenase/reductase dpmpG then oxidizes the 8S hydroxy group to a ketone and the short chain dehydrogenase/reductase dpmpH reduces the ketone to the 8R hydroxy group to yield higginsianin B. Higginsianin B is further methylated by the methyltransferase dpmpI to produce the intermediate named FDDP B. The cytochrome P450 monooxygenase dpmpJ then oxidizes the C-26 methyl to primary alcohol, producing the final diterpenoid pyrone with a C-26 primary alcohol on the gamma-pyrone moiety named FDDP C. This Macrophomina phaseolina (strain MS6) (Charcoal rot fungus) protein is Geranylgeranyl pyrophosphate synthase dpmpD.